The primary structure comprises 1305 residues: Contactin-associated protein like 5-1 (1305 aa).

The N-terminal stretch at 1–24 is a signal peptide; it reads MDSLQRLNGLLTLVLSALWHLGLT. Residues 25-174 enclose the F5/8 type C domain; sequence ASNYNCDDPL…IGMRVEAYGC (150 aa). 2 Laminin G-like domains span residues 180–360 and 367–544; these read VADF…TFSC and PITF…IDLC. Asn-282 carries N-linked (GlcNAc...) asparagine glycosylation. A disulfide bridge links Cys-329 with Cys-360. Residue Asn-496 is glycosylated (N-linked (GlcNAc...) asparagine). 3 disulfide bridges follow: Cys-512-Cys-544, Cys-550-Cys-561, and Cys-555-Cys-570. The EGF-like 1 domain occupies 546-583; the sequence is IKDRCLPNYCEHGGHCAQTWTTFYCNCSDTGYTGATCH. N-linked (GlcNAc...) asparagine glycosylation is present at Asn-571. Cysteines 572 and 582 form a disulfide. The Fibrinogen C-terminal domain occupies 584-790; sequence DSIYEQSCEV…LRCNGDRHFW (207 aa). N-linked (GlcNAc...) asparagine glycosylation is present at Asn-622. The 166-residue stretch at 791–956 folds into the Laminin G-like 3 domain; that stretch reads NAVSFSTEAS…KLMSGVTPGC (166 aa). 4 disulfides stabilise this stretch: Cys-929-Cys-956, Cys-960-Cys-973, Cys-967-Cys-982, and Cys-984-Cys-994. The EGF-like 2 domain occupies 957–995; the sequence is PGHCSSYSSNCHNGGKCVEKQSGYSCDCTNSPNEGPFCQ. The 185-residue stretch at 1014–1198 folds into the Laminin G-like 4 domain; that stretch reads EPYLVIKNTS…VHGTLTESGC (185 aa). Residue Asn-1057 is glycosylated (N-linked (GlcNAc...) asparagine). A disulfide bridge connects residues Cys-1163 and Cys-1198. A helical transmembrane segment spans residues 1238 to 1258; that stretch reads VIGGIIAVVTFVTFCVIGIMI.

This sequence belongs to the neurexin family.

The protein resides in the membrane. May play a role in the correct development and proper functioning of the peripheral and central nervous system and be involved in cell adhesion and intercellular communication. The protein is Contactin-associated protein like 5-1 (Cntnap5a) of Rattus norvegicus (Rat).